The chain runs to 419 residues: Carboxypeptidase A2 (419 aa).

Residues 1-18 (MAMRLILFFGALFGHIYC) form the signal peptide. Residues 19–114 (LETFVGDQVL…EMLFNRRRER (96 aa)) constitute a propeptide, activation peptide. A Peptidase M14 domain is found at 122-414 (AYHTLEEISQ…LGLKAIMEHV (293 aa)). H179 and E182 together coordinate Zn(2+). Substrate is bound by residues 179–182 (HARE), R237, and 254–255 (NR). A disulfide bridge links C248 with C271. H306 contacts Zn(2+). 307–308 (SY) is a binding site for substrate. Residues C320 and C354 are joined by a disulfide bond. Y358 lines the substrate pocket. E380 (proton donor/acceptor) is an active-site residue.

It belongs to the peptidase M14 family. Zn(2+) is required as a cofactor.

It localises to the secreted. The catalysed reaction is Similar to that of carboxypeptidase A (EC 3.4.17.1), but with a preference for bulkier C-terminal residues.. In terms of biological role, carboxypeptidase that catalyzes the release of a C-terminal amino acid, with a preference for large aromatic C-terminal residues. The polypeptide is Carboxypeptidase A2 (CPA2) (Homo sapiens (Human)).